We begin with the raw amino-acid sequence, 333 residues long: tRNA U34 carboxymethyltransferase (333 aa).

Carboxy-S-adenosyl-L-methionine contacts are provided by residues K97, W111, K116, G136, 158–160 (DPS), 189–190 (IE), M205, Y209, and R324.

The protein belongs to the class I-like SAM-binding methyltransferase superfamily. CmoB family. In terms of assembly, homotetramer.

The enzyme catalyses carboxy-S-adenosyl-L-methionine + 5-hydroxyuridine(34) in tRNA = 5-carboxymethoxyuridine(34) in tRNA + S-adenosyl-L-homocysteine + H(+). Functionally, catalyzes carboxymethyl transfer from carboxy-S-adenosyl-L-methionine (Cx-SAM) to 5-hydroxyuridine (ho5U) to form 5-carboxymethoxyuridine (cmo5U) at position 34 in tRNAs. The polypeptide is tRNA U34 carboxymethyltransferase (Chromohalobacter salexigens (strain ATCC BAA-138 / DSM 3043 / CIP 106854 / NCIMB 13768 / 1H11)).